The chain runs to 491 residues: Bifunctional protein GlmU (491 aa).

The segment at 1–238 (MTTQPAVPAA…EWEIRGVNDR (238 aa)) is pyrophosphorylase. Residues 14 to 17 (LAAG), Lys-28, Gln-81, 86 to 87 (GT), 110 to 112 (YGD), Gly-149, Glu-163, Asn-178, and Asn-236 contribute to the UDP-N-acetyl-alpha-D-glucosamine site. Residue Asp-112 participates in Mg(2+) binding. Asn-236 contacts Mg(2+). The segment at 239–259 (AQLADLAAEANRRTLRRWMLA) is linker. The N-acetyltransferase stretch occupies residues 260-491 (GVTIADPATT…TASTDREIQP (232 aa)). UDP-N-acetyl-alpha-D-glucosamine is bound by residues Arg-341 and Lys-359. His-371 acts as the Proton acceptor in catalysis. Tyr-374 and Asn-385 together coordinate UDP-N-acetyl-alpha-D-glucosamine. Acetyl-CoA contacts are provided by residues Ala-388, 394 to 395 (NY), Ser-413, and Ala-431. A disordered region spans residues 460–491 (AKRPGTPAAEAAQRANDESTGTTASTDREIQP).

The protein in the N-terminal section; belongs to the N-acetylglucosamine-1-phosphate uridyltransferase family. In the C-terminal section; belongs to the transferase hexapeptide repeat family. In terms of assembly, homotrimer. Mg(2+) is required as a cofactor.

The protein localises to the cytoplasm. The catalysed reaction is alpha-D-glucosamine 1-phosphate + acetyl-CoA = N-acetyl-alpha-D-glucosamine 1-phosphate + CoA + H(+). It carries out the reaction N-acetyl-alpha-D-glucosamine 1-phosphate + UTP + H(+) = UDP-N-acetyl-alpha-D-glucosamine + diphosphate. It functions in the pathway nucleotide-sugar biosynthesis; UDP-N-acetyl-alpha-D-glucosamine biosynthesis; N-acetyl-alpha-D-glucosamine 1-phosphate from alpha-D-glucosamine 6-phosphate (route II): step 2/2. It participates in nucleotide-sugar biosynthesis; UDP-N-acetyl-alpha-D-glucosamine biosynthesis; UDP-N-acetyl-alpha-D-glucosamine from N-acetyl-alpha-D-glucosamine 1-phosphate: step 1/1. The protein operates within bacterial outer membrane biogenesis; LPS lipid A biosynthesis. Catalyzes the last two sequential reactions in the de novo biosynthetic pathway for UDP-N-acetylglucosamine (UDP-GlcNAc). The C-terminal domain catalyzes the transfer of acetyl group from acetyl coenzyme A to glucosamine-1-phosphate (GlcN-1-P) to produce N-acetylglucosamine-1-phosphate (GlcNAc-1-P), which is converted into UDP-GlcNAc by the transfer of uridine 5-monophosphate (from uridine 5-triphosphate), a reaction catalyzed by the N-terminal domain. This is Bifunctional protein GlmU from Kineococcus radiotolerans (strain ATCC BAA-149 / DSM 14245 / SRS30216).